The primary structure comprises 148 residues: MHEAPRGFLEGEALRPRPFRAGLGHLGWIFAGGALGAAARLAVEGAARRLAPAAYEAFPWGTLAANAAGSFLIAIFGTLIFERFVGERARAFWVLGFLGSLTTFSSYALHTLRGWEASPLLGGLYGGGSLLLGLLAALAGLRLTRRLL.

4 consecutive transmembrane segments (helical) span residues 23–43 (LGHL…RLAV), 61–81 (GTLA…TLIF), 92–112 (FWVL…LHTL), and 120–140 (LLGG…ALAG). The Na(+) site is built by G99 and T102.

This sequence belongs to the fluoride channel Fluc/FEX (TC 1.A.43) family.

The protein resides in the cell membrane. It carries out the reaction fluoride(in) = fluoride(out). Na(+) is not transported, but it plays an essential structural role and its presence is essential for fluoride channel function. In terms of biological role, fluoride-specific ion channel. Important for reducing fluoride concentration in the cell, thus reducing its toxicity. In Rubrobacter xylanophilus (strain DSM 9941 / JCM 11954 / NBRC 16129 / PRD-1), this protein is Fluoride-specific ion channel FluC 2.